The primary structure comprises 527 residues: Amino acid transporter heavy chain SLC3A2 (527 aa).

The tract at residues 1 to 31 is disordered; it reads MSQDTEVDMKDVELNELEPEKQPMNAADGAA. Over 1–75 the chain is Cytoplasmic; it reads MSQDTEVDMK…AGSPGWVRTR (75 aa). Serine 2 carries the post-translational modification Phosphoserine. Threonine 5 carries the phosphothreonine modification. The span at 7-21 shows a compositional bias: basic and acidic residues; that stretch reads VDMKDVELNELEPEK. Lysine 42 participates in a covalent cross-link: Glycyl lysine isopeptide (Lys-Gly) (interchain with G-Cter in ubiquitin). The residue at position 58 (serine 58) is a Phosphoserine. Lysine 59 participates in a covalent cross-link: Glycyl lysine isopeptide (Lys-Gly) (interchain with G-Cter in SUMO2). The chain crosses the membrane as a helical; Signal-anchor for type II membrane protein span at residues 76 to 98; sequence WALLLLFWLGWLGMLAGAVVIIV. Over 99–527 the chain is Extracellular; sequence RAPRCRELPV…GLLLQFPFVA (429 aa). N-linked (GlcNAc...) asparagine glycans are attached at residues asparagine 166, asparagine 249, asparagine 259, and asparagine 263. Phosphoserine is present on serine 300. N-linked (GlcNAc...) asparagine glycans are attached at residues asparagine 318, asparagine 386, and asparagine 400. The residue at position 421 (serine 421) is a Phosphoserine. Asparagine 510 carries an N-linked (GlcNAc...) asparagine glycan.

The protein belongs to the SLC3A transporter family. As to quaternary structure, disulfide-linked heterodimer with a non-glycosylated light chain (SLC7A5, SLC7A6, SLC7A7, SLC7A8, SLC7A10 or SLC7A11). Interacts with TLCD3A/CT120 and ICAM1. Constitutively and specifically associates with beta-1 integrins (alpha-2/beta-1, alpha-3/beta-1, alpha-5/beta-1 and alpha-6/beta-1), but minimally with alpha-4/beta-1. Interacts with LAPTM4B; recruits SLC3A2 and SLC7A5 to lysosomes to promote leucine uptake into these organelles and is required for mTORC1 activation. Post-translationally, phosphorylation on Ser-300 and on Ser-421 by ecto-protein kinases favors heterotypic cell-cell interactions. N-glycosylated; N-glycosylation is crucial for trafficking and stability of SLC3A2 to the plasma membrane. In brain expressed on capillary endothelia in cerebral cortex (at protein level). Highest expression in kidney, jejunum, ileum, colon, placenta, testis and spleen. Lower levels found in liver, lung and brain with weakest expression in heart. Expressed in retina, inner blood-retinal barrier of retina, retinal vascular endothelial cells. Also expressed in C6 glioma cells and in the retinal capillary endothelial cell line TR-iBRB2.

The protein localises to the apical cell membrane. The protein resides in the cell membrane. It is found in the cell junction. It localises to the lysosome membrane. Its subcellular location is the melanosome. The protein localises to the basolateral cell membrane. Acts as a chaperone that facilitates biogenesis and trafficking of functional transporters heterodimers to the plasma membrane. Forms heterodimer with SLC7 family transporters (SLC7A5, SLC7A6, SLC7A7, SLC7A8, SLC7A10 and SLC7A11), a group of amino-acid antiporters. Heterodimers function as amino acids exchangers, the specificity of the substrate depending on the SLC7A subunit. Heterodimers formed by SLC3A2/SLC7A6 or SLC3A2/SLC7A7 mediate the uptake of dibasic amino acids. Heterodimer SLC3A2/SLC7A11 functions as an antiporter by mediating the exchange of extracellular anionic L-cystine and intracellular L-glutamate across the cellular plasma membrane. SLC3A2/SLC7A10 translocates small neutral L- and D-amino acids across the plasma membrane. SLC3A2/SLC75 or SLC3A2/SLC7A8 translocates neutral amino acids with broad specificity, thyroid hormones and L-DOPA. SLC3A2 is essential for plasma membrane localization, stability, and the transport activity of SLC7A5 and SLC7A8. When associated with LAPTM4B, the heterodimer SLC7A5 is recruited to lysosomes to promote leucine uptake into these organelles, and thereby mediates mTORC1 activation. Modulates integrin-related signaling and is essential for integrin-dependent cell spreading, migration and tumor progression. This chain is Amino acid transporter heavy chain SLC3A2, found in Rattus norvegicus (Rat).